The primary structure comprises 200 residues: Holliday junction resolvase RecU (200 aa).

Positions 82, 84, 97, and 116 each coordinate Mg(2+).

Belongs to the RecU family. It depends on Mg(2+) as a cofactor.

It localises to the cytoplasm. The enzyme catalyses Endonucleolytic cleavage at a junction such as a reciprocal single-stranded crossover between two homologous DNA duplexes (Holliday junction).. Its function is as follows. Endonuclease that resolves Holliday junction intermediates in genetic recombination. Cleaves mobile four-strand junctions by introducing symmetrical nicks in paired strands. Promotes annealing of linear ssDNA with homologous dsDNA. Required for DNA repair, homologous recombination and chromosome segregation. This is Holliday junction resolvase RecU from Streptococcus gordonii (strain Challis / ATCC 35105 / BCRC 15272 / CH1 / DL1 / V288).